The primary structure comprises 180 residues: Diphosphoinositol polyphosphate phosphohydrolase 2 (180 aa).

Position 1 is an N-acetylmethionine (Met1). Substrate contacts are provided by residues Arg10, 18–20 (KKR), and 39–41 (SSR). A Nudix hydrolase domain is found at 18–144 (KKRAACLCFR…VHAEYLEKLK (127 aa)). 2 residues coordinate Mg(2+): Gly50 and Glu66. A Nudix box motif is present at residues 51–72 (GGMEPEEEPGGAAVREVYEEAG). Glu69 (proton acceptor) is an active-site residue. Glu70 contacts Mg(2+). Residues 89-91 (RKH), Arg115, and Lys133 each bind substrate.

It belongs to the Nudix hydrolase family. DIPP subfamily. Requires Mg(2+) as cofactor. It depends on Mn(2+) as a cofactor. Expressed in heart and, at lower level in skeletal muscle, pancreas and kidney.

The protein localises to the cytoplasm. The catalysed reaction is diphospho-myo-inositol polyphosphate + H2O = myo-inositol polyphosphate + phosphate.. It carries out the reaction 5-diphospho-1D-myo-inositol 1,2,3,4,6-pentakisphosphate + H2O = 1D-myo-inositol hexakisphosphate + phosphate + H(+). The enzyme catalyses 3,5-bis(diphospho)-1D-myo-inositol 1,2,4,6-tetrakisphosphate + H2O = 3-diphospho-1D-myo-inositol 1,2,4,5,6-pentakisphosphate + phosphate + 2 H(+). It catalyses the reaction 5-diphospho-1D-myo-inositol 1,3,4,6-tetrakisphosphate + H2O = 1D-myo-inositol 1,3,4,5,6-pentakisphosphate + phosphate + H(+). The catalysed reaction is P(1),P(6)-bis(5'-adenosyl) hexaphosphate + H2O = 2 ATP + 2 H(+). It carries out the reaction P(1),P(5)-bis(5'-adenosyl) pentaphosphate + H2O = ADP + ATP + 2 H(+). The enzyme catalyses 5-phospho-alpha-D-ribose 1-diphosphate + H2O = alpha-D-ribose 1,5-bisphosphate + phosphate + H(+). Functionally, cleaves the beta-phosphate from diphosphoinositol polyphosphates such as PP-InsP5 (diphosphoinositol pentakisphosphate), PP-InsP4 (diphosphoinositol tetrakisphosphate) and [PP]2-InsP4 (bisdiphosphoinositol tetrakisphosphate), suggesting that it may play a role in signal transduction. Diadenosine polyphosphates, particularly Ap6A (P(1),P(6)-bis(5a-adenosyl) hexaphosphate) and Ap5A (P(1),P(5)-bis(5'-adenosyl) pentaphosphate) are downstream effectors of a signaling cascade that regulates cardiac KATP channels, can also be substrates, although with lower preference than the diphosphoinositol polyphosphates. Can also catalyze the hydrolysis of 5-phosphoribose 1-diphosphate, generating the glycolytic activator ribose 1,5-bisphosphate. Does not play a role in U8 snoRNA decapping activity. Binds U8 snoRNA. This is Diphosphoinositol polyphosphate phosphohydrolase 2 from Homo sapiens (Human).